Here is a 790-residue protein sequence, read N- to C-terminus: Penicillin-binding protein 1A (790 aa).

The Cytoplasmic portion of the chain corresponds to 1–6 (MYKSLF). Residues 7-27 (FCLKIFAVLILVGCGITAYII) traverse the membrane as a helical; Signal-anchor for type II membrane protein segment. Residues 28–790 (YHYSRDLPDY…SKEDQSQEIY (763 aa)) are Periplasmic-facing. A transglycosylase region spans residues 49–220 (TRIYSHDGKL…SELNPERNYA (172 aa)). Glutamate 87 functions as the Proton donor; for transglycosylase activity in the catalytic mechanism. The interval 398-711 (DVIVVEPIKD…SNVVLPIFID (314 aa)) is transpeptidase. The active-site Acyl-ester intermediate; for transpeptidase activity is serine 457.

This sequence in the N-terminal section; belongs to the glycosyltransferase 51 family. In the C-terminal section; belongs to the transpeptidase family.

Its subcellular location is the cell inner membrane. It carries out the reaction [GlcNAc-(1-&gt;4)-Mur2Ac(oyl-L-Ala-gamma-D-Glu-L-Lys-D-Ala-D-Ala)](n)-di-trans,octa-cis-undecaprenyl diphosphate + beta-D-GlcNAc-(1-&gt;4)-Mur2Ac(oyl-L-Ala-gamma-D-Glu-L-Lys-D-Ala-D-Ala)-di-trans,octa-cis-undecaprenyl diphosphate = [GlcNAc-(1-&gt;4)-Mur2Ac(oyl-L-Ala-gamma-D-Glu-L-Lys-D-Ala-D-Ala)](n+1)-di-trans,octa-cis-undecaprenyl diphosphate + di-trans,octa-cis-undecaprenyl diphosphate + H(+). The enzyme catalyses Preferential cleavage: (Ac)2-L-Lys-D-Ala-|-D-Ala. Also transpeptidation of peptidyl-alanyl moieties that are N-acyl substituents of D-alanine.. It functions in the pathway cell wall biogenesis; peptidoglycan biosynthesis. Functionally, cell wall formation. Synthesis of cross-linked peptidoglycan from the lipid intermediates. The enzyme has a penicillin-insensitive transglycosylase N-terminal domain (formation of linear glycan strands) and a penicillin-sensitive transpeptidase C-terminal domain (cross-linking of the peptide subunits). The protein is Penicillin-binding protein 1A (mrcA) of Rickettsia felis (strain ATCC VR-1525 / URRWXCal2) (Rickettsia azadi).